Here is a 202-residue protein sequence, read N- to C-terminus: uncharacterized protein (202 aa).

Belongs to the dienelactone hydrolase family.

This is an uncharacterized protein from Bacillus subtilis (strain 168).